The sequence spans 104 residues: MSIMDYFRRSQPKSATVAKERLQIIVARERARPTGEPDYLPRLKQELLQVISKYERIDLDQVSVNVERSGDCDVLELNVVLSESERAAVRAAASRAGAAAVRNC.

The protein belongs to the MinE family.

Prevents the cell division inhibition by proteins MinC and MinD at internal division sites while permitting inhibition at polar sites. This ensures cell division at the proper site by restricting the formation of a division septum at the midpoint of the long axis of the cell. The sequence is that of Cell division topological specificity factor from Sorangium cellulosum (strain So ce56) (Polyangium cellulosum (strain So ce56)).